Here is a 289-residue protein sequence, read N- to C-terminus: Putative 2-aminoethylphosphonate transport system permease protein PhnU (289 aa).

6 helical membrane-spanning segments follow: residues 19 to 39 (WLLL…SLIV), 76 to 96 (FFAT…LVFI), 111 to 131 (FIAL…GSAG), 150 to 170 (FLYS…PLVM), 202 to 222 (VIFP…LLLT), and 254 to 274 (YTVA…LFSL). The ABC transmembrane type-1 domain occupies 68–275 (LLNTLQIAFF…VLSLGLFSLY (208 aa)).

This sequence belongs to the binding-protein-dependent transport system permease family.

It is found in the cell inner membrane. Functionally, probably part of the PhnSTUV complex (TC 3.A.1.11.5) involved in 2-aminoethylphosphonate import. Probably responsible for the translocation of the substrate across the membrane. This Salmonella paratyphi A (strain ATCC 9150 / SARB42) protein is Putative 2-aminoethylphosphonate transport system permease protein PhnU (phnU).